Reading from the N-terminus, the 289-residue chain is MSTYLIGDIHGCLDELLALLAQVNFDPQQDTLWLTGDLVARGPASLDVLRYVRSLGPAVRMVLGNHDLHLLAVYAGISRNKPKDRITPLLDAPDADELINWLRRQPVLQVDDQLKLIMAHAGITPQWDIETAKMCAREVEAVLSSDSYPLFLDAMYGDMPNNWSPELTGLARLRFSTNALTRMRFCFPNGQLDMICKDTPENAPAPLKPWFDLPRLVDPEYSIIFGHWASLEGKGVPEGIYGLDTGCCWGGDLTLLRWEDKRYFTQRAFKAEAEINNNNGFAAGEEVQH.

The protein belongs to the Ap4A hydrolase family.

It carries out the reaction P(1),P(4)-bis(5'-adenosyl) tetraphosphate + H2O = 2 ADP + 2 H(+). In terms of biological role, hydrolyzes diadenosine 5',5'''-P1,P4-tetraphosphate to yield ADP. The sequence is that of Bis(5'-nucleosyl)-tetraphosphatase, symmetrical from Yersinia pseudotuberculosis serotype IB (strain PB1/+).